A 160-amino-acid chain; its full sequence is Large ribosomal subunit protein eL29 (160 aa).

Positions 1-26 (MAKSKNHTTHNQSRKWHRNGIKKPRS) are enriched in basic residues. A disordered region spans residues 1-32 (MAKSKNHTTHNQSRKWHRNGIKKPRSQRYESL). Lys5 is modified (N6-methyllysine). Phosphoserine is present on Ser31. Lys33 carries the N6-acetyllysine modification. The interval 119–160 (CRPKSQAKAQSKAKATAGGTAAAPVPPASAPKGAQAPTKAPQ) is disordered. Residues 121–141 (PKSQAKAQSKAKATAGGTAAA) are compositionally biased toward low complexity.

The protein belongs to the eukaryotic ribosomal protein eL29 family. Component of the large ribosomal subunit.

It localises to the cytoplasm. Component of the large ribosomal subunit. The ribosome is a large ribonucleoprotein complex responsible for the synthesis of proteins in the cell. This is Large ribosomal subunit protein eL29 (RPL29) from Sus scrofa (Pig).